Consider the following 281-residue polypeptide: MIMKLAEKFEELKNKGEKAFVAFYVGGDPNLEISEKALEVICKHADIVEIGIPFSDPVADGITIQKADVRALNSGMNPLKAFELAKKLNEKAPNVPKVFLTYYNIIFKMGEEEFVKKCKEAGVSGIIVPDLPIEEADSLYNYCKKYGVDLIFLVAPTTPDERLKKILEKCSGFVYVVSVTGITGAREKVAEETKELIKRVKKFSKIPACVGFGISKREHVEEITEIADGAIVGSAIVKIVEKHLDENGQIKDEEKFLKELEEFVKNLKEGTKKKAKVAIKN.

Residues Glu-49 and Asp-60 each act as proton acceptor in the active site.

The protein belongs to the TrpA family. As to quaternary structure, tetramer of two alpha and two beta chains.

The enzyme catalyses (1S,2R)-1-C-(indol-3-yl)glycerol 3-phosphate + L-serine = D-glyceraldehyde 3-phosphate + L-tryptophan + H2O. It functions in the pathway amino-acid biosynthesis; L-tryptophan biosynthesis; L-tryptophan from chorismate: step 5/5. The alpha subunit is responsible for the aldol cleavage of indoleglycerol phosphate to indole and glyceraldehyde 3-phosphate. This Methanocaldococcus jannaschii (strain ATCC 43067 / DSM 2661 / JAL-1 / JCM 10045 / NBRC 100440) (Methanococcus jannaschii) protein is Tryptophan synthase alpha chain.